The following is a 348-amino-acid chain: 3-methyl-2-oxobutanoate dehydrogenase subunit beta (348 aa).

Residues glutamate 51, 80 to 82 (LAE), glutamine 104, and 108 to 111 (FSYP) each bind thiamine diphosphate. Substrate is bound by residues 105–108 (FDGF) and histidine 151. Histidine 151 (proton acceptor) is an active-site residue.

As to quaternary structure, heteromer of E1 alpha (BkdA) and beta (BkdB) subunits. Part of the BCKADH complex, consisting of multiple copies of BkdA/BkdB (E1), BkdC (E2) and Lpd (E3). Thiamine diphosphate is required as a cofactor.

It carries out the reaction N(6)-[(R)-lipoyl]-L-lysyl-[protein] + 3-methyl-2-oxobutanoate + H(+) = N(6)-[(R)-S(8)-2-methylpropanoyldihydrolipoyl]-L-lysyl-[protein] + CO2. Its function is as follows. Component of the branched-chain alpha-ketoacid dehydrogenase (BCKADH) complex, that catalyzes the overall conversion of branched-chain alpha-ketoacids to acyl-CoA and CO(2). The sequence is that of 3-methyl-2-oxobutanoate dehydrogenase subunit beta (bkdB) from Mycobacterium tuberculosis (strain CDC 1551 / Oshkosh).